The primary structure comprises 218 residues: Probable GTP-binding protein EngB (218 aa).

The EngB-type G domain occupies 21–192 (NAPQIALAGR…WQELHRLAFP (172 aa)). GTP contacts are provided by residues 29–36 (GRSNVGKS), 56–60 (GKTRS), 75–78 (DLPG), 142–145 (TKAD), and 171–173 (FSS). 2 residues coordinate Mg(2+): Ser-36 and Thr-58. Residues 194–218 (MAFDTPSDGAPEPADEPEAASERAE) are disordered.

This sequence belongs to the TRAFAC class TrmE-Era-EngA-EngB-Septin-like GTPase superfamily. EngB GTPase family. Mg(2+) is required as a cofactor.

Necessary for normal cell division and for the maintenance of normal septation. This Oleidesulfovibrio alaskensis (strain ATCC BAA-1058 / DSM 17464 / G20) (Desulfovibrio alaskensis) protein is Probable GTP-binding protein EngB.